A 322-amino-acid chain; its full sequence is Protein SEC13 homolog (322 aa).

Valine 2 carries the post-translational modification N-acetylvaline. WD repeat units lie at residues 11–50, 55–96, 101–144, 148–204, 210–253, and 260–299; these read SHEDMIHDAQMDYYGTRLATCSSDRSVKIFDVRNGGQILI, GHEG…WEKS, GHDS…EVKK, AHTI…QWKE, AHSD…SNTW, and KFNDVVWHVSWSITANILAVSGGDNKVTLWKESVDGQWVC. Serine 184 bears the Phosphoserine mark. Serine 309 bears the Phosphoserine mark.

The protein belongs to the WD repeat SEC13 family. In terms of assembly, at the nuclear pore: component of the Y-shaped Nup107-160 subcomplex of the nuclear pore complex (NPC). The Nup107-160 subcomplex includes NUP160, NUP133, NUP107, NUP98, NUP85, NUP43, NUP37, SEH1 and SEC13. At the COPII coat complex: interacts with SEC31A and SEC31B. Interacts with SEC16A. Interacts with SEC16B. Component of the GATOR2 subcomplex, composed of MIOS, SEC13, SEH1L, WDR24 and WDR59. The GATOR2 complex interacts with CASTOR1 and CASTOR2; the interaction is negatively regulated by arginine. The GATOR2 complex interacts with SESN1, SESN2 and SESN3; the interaction is negatively regulated by amino acids.

Its subcellular location is the cytoplasmic vesicle. The protein localises to the COPII-coated vesicle membrane. The protein resides in the endoplasmic reticulum membrane. It is found in the nucleus. It localises to the nuclear pore complex. Its subcellular location is the lysosome membrane. Its activity is regulated as follows. The GATOR2 complex is negatively regulated by the upstream amino acid sensors CASTOR1 and SESN2, which sequester the GATOR2 complex in absence of amino acids. In the presence of abundant amino acids, GATOR2 is released from CASTOR1 and SESN2 and activated. Functions as a component of the nuclear pore complex (NPC) and the COPII coat. At the endoplasmic reticulum, SEC13 is involved in the biogenesis of COPII-coated vesicles. Required for the exit of adipsin (CFD/ADN), an adipocyte-secreted protein from the endoplasmic reticulum. Functionally, as a component of the GATOR2 complex, functions as an activator of the amino acid-sensing branch of the mTORC1 signaling pathway. The GATOR2 complex indirectly activates mTORC1 through the inhibition of the GATOR1 subcomplex. GATOR2 probably acts as an E3 ubiquitin-protein ligase toward GATOR1. In the presence of abundant amino acids, the GATOR2 complex mediates ubiquitination of the NPRL2 core component of the GATOR1 complex, leading to GATOR1 inactivation. In the absence of amino acids, GATOR2 is inhibited, activating the GATOR1 complex. Within the GATOR2 complex, SEC13 and SEH1L are required to stabilize the complex. This chain is Protein SEC13 homolog, found in Homo sapiens (Human).